A 176-amino-acid chain; its full sequence is Outer membrane protein assembly factor BamE (176 aa).

Positions methionine 1 to glycine 21 are cleaved as a signal peptide. A lipid anchor (N-palmitoyl cysteine) is attached at cysteine 22. A lipid anchor (S-diacylglycerol cysteine) is attached at cysteine 22. A disordered region spans residues lysine 121 to glutamine 176. Over residues glycine 123 to aspartate 132 the composition is skewed to polar residues. Over residues glutamine 134–proline 144 the composition is skewed to basic and acidic residues. The segment covering valine 163–glutamine 176 has biased composition (pro residues).

It belongs to the BamE family. In terms of assembly, part of the Bam complex.

The protein localises to the cell outer membrane. Its function is as follows. Part of the outer membrane protein assembly complex, which is involved in assembly and insertion of beta-barrel proteins into the outer membrane. May have a structural role in maintaining the cell envelope integrity. This chain is Outer membrane protein assembly factor BamE, found in Pseudomonas aeruginosa (strain ATCC 15692 / DSM 22644 / CIP 104116 / JCM 14847 / LMG 12228 / 1C / PRS 101 / PAO1).